The chain runs to 728 residues: MEEIPALYPTEQEFKNPIDYLSNPHIKRLGVRYGMVKVVPPNGFCPPLSIDMENFTFQPRIQNLENLDLKNRCRLFFMKQLNNFKRSVKDPSKLILREPYTIVEYSDSTHASEILKKKVYFYDVFSELIKDNRTLTDTTQSFRRKLKFRDISQLRGDISLWRTISKKFNVPIGLLKEIFEKYIASYYIFLHSLNENVHTALHADQYPKSLLSDDEDDFDLGPDSNSGSDFEEDDDDACIVCRKTNDPKRTILCDSCDKPFHIYCLSPPLERVPSGDWICNTCIVGNGYYGFTQDTHDYSLPEFQEYCKRQNSRLLPARKLSIDELEEMFWSLVTKNRRSSLTTVKYGADIHNELPGQITGFPTREFIPKNINGDELIDYLKYCDHPMNLTNLPMAHNSLLPLFKRNISGMTIPWIYIGSLFSTFCWHMEDQYTLSANYQHEGDPKVWYSIPESGCTKFNDLLNDMSPDLFIKQPDLLHQLVTLISPYDPNFKKSGIPVYKAVQKPNEYIITFPKCYHAGFNTGYNFNEAVNFTIDFWLPYGFGAITDYKLTQKACVFDMFDLMINVLDKYNKDTLLFNDAFVRQCYSSLIVFYNTELKRIRKIQAIVPRTTLLEVHTDPNDEDEEYDIFCSQCKTICSIAFVLRKNNYDSIRTYKRHKKNHLSIRQWNELSTTDSKVSILCTQDYLKSIQNLNNSDGEEPYIDDELYFTKSLKDIDSLIKQVGVKLDR.

Residues 4 to 47 form the JmjN domain; the sequence is IPALYPTEQEFKNPIDYLSNPHIKRLGVRYGMVKVVPPNGFCPP. The segment at 235 to 285 adopts a PHD-type zinc-finger fold; that stretch reads DDACIVCRKTNDPKRTILCDSCDKPFHIYCLSPPLERVPSGDWICNTCIVG. The 169-residue stretch at 381-549 folds into the JmjC domain; it reads KYCDHPMNLT…YGFGAITDYK (169 aa). His427, Asp430, and His517 together coordinate Fe cation.

This sequence belongs to the JARID1 histone demethylase family. Fe(2+) serves as cofactor.

It is found in the nucleus. The catalysed reaction is N(6),N(6),N(6)-trimethyl-L-lysyl(4)-[histone H3] + 3 2-oxoglutarate + 3 O2 = L-lysyl(4)-[histone H3] + 3 formaldehyde + 3 succinate + 3 CO2. Its function is as follows. Histone demethylase that demethylates 'Lys-4' of histone H3, thereby playing a central role in histone code. Demethylates trimethylated H3 'Lys-4'. The polypeptide is Histone demethylase JHD2 (JHD2) (Saccharomyces cerevisiae (strain ATCC 204508 / S288c) (Baker's yeast)).